The following is a 676-amino-acid chain: Methionine--tRNA ligase (676 aa).

Residues 15–25 carry the 'HIGH' region motif; the sequence is PYANGPIHLGH. Residues Cys-146, Cys-149, Cys-159, and Cys-162 each coordinate Zn(2+). The 'KMSKS' region signature appears at 332–336; it reads KMSKS. Lys-335 lines the ATP pocket. The tRNA-binding domain occupies 575 to 676; sequence DFAKIDLRIA…EGAQPGMRVK (102 aa).

It belongs to the class-I aminoacyl-tRNA synthetase family. MetG type 1 subfamily. Homodimer. Requires Zn(2+) as cofactor.

Its subcellular location is the cytoplasm. The enzyme catalyses tRNA(Met) + L-methionine + ATP = L-methionyl-tRNA(Met) + AMP + diphosphate. Functionally, is required not only for elongation of protein synthesis but also for the initiation of all mRNA translation through initiator tRNA(fMet) aminoacylation. The sequence is that of Methionine--tRNA ligase from Shewanella sp. (strain ANA-3).